A 327-amino-acid polypeptide reads, in one-letter code: GTPase Obg (327 aa).

One can recognise an Obg domain in the interval 1–159 (MKFLDQVKIY…YVIWLQLKTI (159 aa)). Residues 160-327 (ADVGIVGLPN…IKAKLLSYVS (168 aa)) enclose the OBG-type G domain. GTP-binding positions include 166–173 (GLPNAGKS), 191–195 (FTTLN), 212–215 (DIPG), 279–282 (NKTD), and 308–310 (STL). Residues Ser-173 and Thr-193 each contribute to the Mg(2+) site.

It belongs to the TRAFAC class OBG-HflX-like GTPase superfamily. OBG GTPase family. Monomer. Requires Mg(2+) as cofactor.

The protein localises to the cytoplasm. An essential GTPase which binds GTP, GDP and possibly (p)ppGpp with moderate affinity, with high nucleotide exchange rates and a fairly low GTP hydrolysis rate. Plays a role in control of the cell cycle, stress response, ribosome biogenesis and in those bacteria that undergo differentiation, in morphogenesis control. This Pelagibacter ubique (strain HTCC1062) protein is GTPase Obg.